The chain runs to 393 residues: NAD(P)H-quinone oxidoreductase subunit H, chloroplastic (393 aa).

Belongs to the complex I 49 kDa subunit family. As to quaternary structure, NDH is composed of at least 16 different subunits, 5 of which are encoded in the nucleus.

It localises to the plastid. It is found in the chloroplast thylakoid membrane. The catalysed reaction is a plastoquinone + NADH + (n+1) H(+)(in) = a plastoquinol + NAD(+) + n H(+)(out). It carries out the reaction a plastoquinone + NADPH + (n+1) H(+)(in) = a plastoquinol + NADP(+) + n H(+)(out). In terms of biological role, NDH shuttles electrons from NAD(P)H:plastoquinone, via FMN and iron-sulfur (Fe-S) centers, to quinones in the photosynthetic chain and possibly in a chloroplast respiratory chain. The immediate electron acceptor for the enzyme in this species is believed to be plastoquinone. Couples the redox reaction to proton translocation, and thus conserves the redox energy in a proton gradient. In Lobularia maritima (Sweet alyssum), this protein is NAD(P)H-quinone oxidoreductase subunit H, chloroplastic.